Consider the following 258-residue polypeptide: UDP-N-acetylenolpyruvoylglucosamine reductase (258 aa).

Residue Arg-142 is part of the active site. Ser-184 (proton donor) is an active-site residue. Glu-254 is a catalytic residue.

Belongs to the MurB family. The cofactor is FAD.

It is found in the cytoplasm. It catalyses the reaction UDP-N-acetyl-alpha-D-muramate + NADP(+) = UDP-N-acetyl-3-O-(1-carboxyvinyl)-alpha-D-glucosamine + NADPH + H(+). It participates in cell wall biogenesis; peptidoglycan biosynthesis. Cell wall formation. The polypeptide is UDP-N-acetylenolpyruvoylglucosamine reductase (Campylobacter jejuni subsp. jejuni serotype O:2 (strain ATCC 700819 / NCTC 11168)).